We begin with the raw amino-acid sequence, 242 residues long: Protein MHF1 homolog (242 aa).

The disordered stretch occupies residues 208–242; the sequence is LKAKEPQSERKRKKGSAKKEDKASSSNAVRITTDL. Residues 231 to 242 are compositionally biased toward polar residues; the sequence is SSSNAVRITTDL.

This sequence belongs to the TAF9 family. CENP-S/MHF1 subfamily.

The protein resides in the nucleus. Involved in the promotion of spontaneous somatic homologous recombination (HR) events, which is opposite to the function of FANCM in ordered HR. Only FANCM is essential for replicative repair in the absence of the endonuclease MUS81. Acts in the same pathway as FANCM to restrain class II meiotic crossing over (CO), and acts with FANCM during meiosis to repair interstrand cross-links (ICLs). This common pathway between MHF1 and FANCM is in parallel to the pathway that involves the RECQ4A helicase. The chain is Protein MHF1 homolog from Arabidopsis thaliana (Mouse-ear cress).